Here is a 395-residue protein sequence, read N- to C-terminus: ATP-dependent RNA helicase eIF4A (395 aa).

The short motif at 22 to 50 is the Q motif element; that stretch reads TSFDDLGLKDELLRGIYGYGFENPSSIQQ. A Helicase ATP-binding domain is found at 53–223; it reads ILPVIKGNDV…GKFMRDPVRI (171 aa). 66–73 provides a ligand contact to ATP; the sequence is AQSGTGKT. The DEAD box signature appears at 171–174; it reads DEAD. The Helicase C-terminal domain occupies 234–395; it reads GIKQFYIDVE…EMPTNIADLI (162 aa).

It belongs to the DEAD box helicase family. eIF4A subfamily. In terms of assembly, component of the eIF4F complex, which composition varies with external and internal environmental conditions. It is composed of at least eIF4A, eIF4E and eIF4G.

It is found in the cytoplasm. It carries out the reaction ATP + H2O = ADP + phosphate + H(+). Functionally, ATP-dependent RNA helicase which is a subunit of the eIF4F complex involved in cap recognition and is required for mRNA binding to ribosome. In the current model of translation initiation, eIF4A unwinds RNA secondary structures in the 5'-UTR of mRNAs which is necessary to allow efficient binding of the small ribosomal subunit, and subsequent scanning for the initiator codon. The chain is ATP-dependent RNA helicase eIF4A (TIF1) from Yarrowia lipolytica (strain CLIB 122 / E 150) (Yeast).